The following is a 154-amino-acid chain: MVKAVAVLRGDSKITGTVTFEQADENSPTTVSWNIKGNDPNAKRGFHVHQFGDNTNGCTSAGPHFNPYGKTHGAPEDSERHVGDLGNFETDAEGNAVGSKQDKLIKLIGAESVLGRTLVVHAGTDDLGRGGNEESKKTGNAGARPACGVIGIAA.

Residues His-47, His-49, and His-64 each contribute to the Cu cation site. A disulfide bridge links Cys-58 with Cys-147. 4 residues coordinate Zn(2+): His-64, His-72, His-81, and Asp-84. His-121 is a binding site for Cu cation. Arg-144 is a binding site for substrate.

Belongs to the Cu-Zn superoxide dismutase family. Homodimer. Cu cation serves as cofactor. It depends on Zn(2+) as a cofactor.

The protein localises to the cytoplasm. The enzyme catalyses 2 superoxide + 2 H(+) = H2O2 + O2. In terms of biological role, destroys radicals which are normally produced within the cells and which are toxic to biological systems. The chain is Superoxide dismutase [Cu-Zn] (sodC) from Aspergillus fumigatus (strain ATCC MYA-4609 / CBS 101355 / FGSC A1100 / Af293) (Neosartorya fumigata).